Consider the following 612-residue polypeptide: Bifunctional 6(G)-fructosyltransferase/2,1-fructan:2,1-fructan 1-fructosyltransferase (612 aa).

At 1–24 the chain is on the cytoplasmic side; it reads MDAQDIESRHPLIGARPRRRALRS. The chain crosses the membrane as a helical; Signal-anchor for type II membrane protein span at residues 25 to 45; the sequence is LSILLAAALLLGLVLFYANGT. The Vacuolar portion of the chain corresponds to 46 to 612; sequence GSGTAVDPVR…NSTYNDFYHF (567 aa). Residues 82–85, Gln101, and Trp109 contribute to the substrate site; that span reads YMND. Asp85 is an active-site residue. Asn111 is a glycosylation site (N-linked (GlcNAc...) asparagine). Substrate-binding positions include 144-145 and 208-209; these read WT and RD. N-linked (GlcNAc...) asparagine glycosylation is found at Asn216 and Asn230. Glu267 contacts substrate. Asn465 carries N-linked (GlcNAc...) asparagine glycosylation. Cys466 and Cys514 are oxidised to a cystine. 2 N-linked (GlcNAc...) asparagine glycosylation sites follow: Asn586 and Asn603.

The protein belongs to the glycosyl hydrolase 32 family. Post-translationally, might be processed in two N-terminal and C-terminal proteolytic fragments.

The protein localises to the vacuole membrane. It catalyses the reaction [1-beta-D-fructofuranosyl-(2-&gt;1)-]m+1 alpha-D-glucopyranoside + [1-beta-D-fructofuranosyl-(2-&gt;1)-]n+1 alpha-D-glucopyranoside = [1-beta-D-fructofuranosyl-(2-&gt;1)-]m alpha-D-glucopyranoside + [1-beta-D-fructofuranosyl-(2-&gt;1)-]n+1 beta-D-fructofuranosyl-(2-&gt;6)-alpha-D-glucopyranoside (m &gt; 0, n &gt;= 0).. The enzyme catalyses [beta-D-fructosyl-(2-&gt;1)-]m + [beta-D-fructosyl-(2-&gt;1)-]n = [beta-D-fructosyl-(2-&gt;1)-]m-1 + [beta-D-fructosyl-(2-&gt;1)-]n+1.. In terms of biological role, involved in the synthesis of fructan of the inulin neoseries. Catalyzes a self-transfer between identical oligosaccharides of the 1-kestose series. This chain is Bifunctional 6(G)-fructosyltransferase/2,1-fructan:2,1-fructan 1-fructosyltransferase, found in Allium cepa (Onion).